The primary structure comprises 252 residues: Putative hydro-lyase OB3382 (252 aa).

Belongs to the D-glutamate cyclase family.

The protein is Putative hydro-lyase OB3382 of Oceanobacillus iheyensis (strain DSM 14371 / CIP 107618 / JCM 11309 / KCTC 3954 / HTE831).